Reading from the N-terminus, the 310-residue chain is p-hydroxybenzoic acid efflux pump subunit AaeA (310 aa).

A helical transmembrane segment spans residues 12–32; the sequence is AITVVLVILAFIAIFNAWVYY.

It belongs to the membrane fusion protein (MFP) (TC 8.A.1) family.

It localises to the cell inner membrane. Functionally, forms an efflux pump with AaeB. This is p-hydroxybenzoic acid efflux pump subunit AaeA from Shigella sonnei (strain Ss046).